Consider the following 154-residue polypeptide: Prefoldin subunit alpha (154 aa).

The span at 92 to 102 shows a compositional bias: polar residues; sequence DNAVESLSTKQ. A disordered region spans residues 92 to 154; the sequence is DNAVESLSTK…MQDQQPEDNE (63 aa). Over residues 103-114 the composition is skewed to basic and acidic residues; the sequence is DALDNRIESLRD. Residues 128-148 are compositionally biased toward low complexity; sequence QQAQQMQQQMQQQQMQQMQDQ.

It belongs to the prefoldin subunit alpha family. Heterohexamer of two alpha and four beta subunits.

The protein localises to the cytoplasm. Molecular chaperone capable of stabilizing a range of proteins. Seems to fulfill an ATP-independent, HSP70-like function in archaeal de novo protein folding. The sequence is that of Prefoldin subunit alpha from Haloquadratum walsbyi (strain DSM 16790 / HBSQ001).